We begin with the raw amino-acid sequence, 224 residues long: UPF0758 protein CV_3079 (224 aa).

Residues 102 to 224 (ALSSPQQVRD…AESFAERGWL (123 aa)) form the MPN domain. Zn(2+) contacts are provided by histidine 173, histidine 175, and aspartate 186. The JAMM motif motif lies at 173 to 186 (HNHPSGVSEPSSAD).

The protein belongs to the UPF0758 family.

The protein is UPF0758 protein CV_3079 of Chromobacterium violaceum (strain ATCC 12472 / DSM 30191 / JCM 1249 / CCUG 213 / NBRC 12614 / NCIMB 9131 / NCTC 9757 / MK).